A 464-amino-acid chain; its full sequence is tRNA modification GTPase MnmE (464 aa).

Positions 27, 89, and 128 each coordinate (6S)-5-formyl-5,6,7,8-tetrahydrofolate. The TrmE-type G domain maps to 225 to 384 (GLATAIIGHP…LEDRIAAMFF (160 aa)). Asparagine 235 contacts K(+). GTP contacts are provided by residues 235–240 (NVGKSS), 254–260 (TDVAGTT), and 279–282 (DTAG). Position 239 (serine 239) interacts with Mg(2+). K(+) is bound by residues threonine 254, valine 256, and threonine 259. Mg(2+) is bound at residue threonine 260. Residue lysine 464 coordinates (6S)-5-formyl-5,6,7,8-tetrahydrofolate.

The protein belongs to the TRAFAC class TrmE-Era-EngA-EngB-Septin-like GTPase superfamily. TrmE GTPase family. Homodimer. Heterotetramer of two MnmE and two MnmG subunits. The cofactor is K(+).

The protein resides in the cytoplasm. Its function is as follows. Exhibits a very high intrinsic GTPase hydrolysis rate. Involved in the addition of a carboxymethylaminomethyl (cmnm) group at the wobble position (U34) of certain tRNAs, forming tRNA-cmnm(5)s(2)U34. This Pediococcus pentosaceus (strain ATCC 25745 / CCUG 21536 / LMG 10740 / 183-1w) protein is tRNA modification GTPase MnmE.